A 972-amino-acid chain; its full sequence is MATRGHVQDPNDRRLRPIYDYLDNGNNKMAIQQADKLLKKHKDLHCAKVLKAIGLQRTGKQEEAFTLAQEVAALEPTDDNSLQALTILYREMHRPELVTKLYEAAVKKVPNSEEYHSHLFMAYARVGEYKKMQQAGMALYKIVPKNPYYFWSVMSLIMQSISAQDENLSKTMFLPLAERMVEKMVKEDKIEAEAEVELYYMILERLGKYQEALDVIRGKLGEKLTSEIQSRENKCMAMYKKLSRWPECNALSRRLLLKNSDDWQFYLTYFDSVFRLIEEAWSPPAEGEHSLEGEVHYSAEKAVKFIEDRITEESKSSRHLRGPHLAKLELIRRLRSQGCNDEYKLGDPEELMFQYFKKFGDKPCCFTDLKVFVDLLPATQCTKFINQLLGVVPLSTPTEDKLALPADIRALQQHLCVVQLTRLLGLYHTMDKNQKLSVVRELMLRYQHGLEFGKTCLKTELQFSDYYCLLAVHALIDVWRETGDETTVWQALTLLEEGLTHSPSNAQFKLLLVRIYCMLGAFEPVVDLYSSLDAKHIQHDTIGYLLTRYAESLGQYAAASQSCNFALRFFHSNQKDTSEYIIQAYKYGAFEKIPEFIAFRNRLNNSLHFAQVRTERMLLDLLLEANISTSLAESIKSMNLRPEEDDIPWEDLRDNRDLNVFFSWDPKDRDVSEEHKKLSLEEETLWLRIRSLTLRLISGLPSLNHPVEPKNSEKTAENGVSSRIDILRLLLQQLEATLETGKRFIEKDIQYPFLGPVPTRMGGFFNSGCSQCQISSFYLVNDIYELDTSGLEDTMEIQERIENSFKSLLDQLKDVFSKCKGDLLEVKDGNLKTHPTLLENLVFFVETISVILWVSSYCESVLRPYKLNLQKKKKKKKETSIIMPPVFTSFQDYVTGLQTLISNVVDHIKGLETHLIALKLEELILEDTSLSPEERKFSKTVQGKVQSSYLHSLLEMGELLKKRLETTKKLKI.

4 TPR repeats span residues 11–44 (NDRR…HKDL), 45–78 (HCAK…EPTD), 79–112 (DNSL…VPNS), and 114–146 (EYHS…VPKN).

The protein belongs to the MDM20/NAA25 family. Component of the N-terminal acetyltransferase B (NatB) complex which is composed of NAA20 and NAA25.

The protein localises to the cytoplasm. Its function is as follows. Non-catalytic subunit of the NatB complex which catalyzes acetylation of the N-terminal methionine residues of peptides beginning with Met-Asp, Met-Glu, Met-Asn and Met-Gln. May play a role in normal cell-cycle progression. The polypeptide is N-alpha-acetyltransferase 25, NatB auxiliary subunit (NAA25) (Homo sapiens (Human)).